Here is a 195-residue protein sequence, read N- to C-terminus: Translation initiation factor IF-3 (195 aa).

The tract at residues 158–195 (EQSEVQQRPKREGRNMIMFLSPRKTPLIKKEEDAKENN) is disordered. Residues 185–195 (IKKEEDAKENN) show a composition bias toward basic and acidic residues.

It belongs to the IF-3 family. In terms of assembly, monomer.

The protein resides in the cytoplasm. Functionally, IF-3 binds to the 30S ribosomal subunit and shifts the equilibrium between 70S ribosomes and their 50S and 30S subunits in favor of the free subunits, thus enhancing the availability of 30S subunits on which protein synthesis initiation begins. In Prochlorococcus marinus (strain MIT 9515), this protein is Translation initiation factor IF-3.